The chain runs to 243 residues: Type III pantothenate kinase (243 aa).

Residue 7-14 (DIGNTRLK) participates in ATP binding. Residues Tyr95 and 102 to 105 (GIDR) contribute to the substrate site. The active-site Proton acceptor is Asp104. Thr126 is a binding site for ATP. Thr177 provides a ligand contact to substrate.

This sequence belongs to the type III pantothenate kinase family. Homodimer. NH4(+) is required as a cofactor. It depends on K(+) as a cofactor.

It is found in the cytoplasm. The enzyme catalyses (R)-pantothenate + ATP = (R)-4'-phosphopantothenate + ADP + H(+). It functions in the pathway cofactor biosynthesis; coenzyme A biosynthesis; CoA from (R)-pantothenate: step 1/5. In terms of biological role, catalyzes the phosphorylation of pantothenate (Pan), the first step in CoA biosynthesis. The polypeptide is Type III pantothenate kinase (Acinetobacter baylyi (strain ATCC 33305 / BD413 / ADP1)).